The sequence spans 150 residues: D-aminoacyl-tRNA deacylase (150 aa).

Residues 138–139 carry the Gly-cisPro motif, important for rejection of L-amino acids motif; it reads GP.

It belongs to the DTD family. Homodimer.

It is found in the cytoplasm. The catalysed reaction is glycyl-tRNA(Ala) + H2O = tRNA(Ala) + glycine + H(+). The enzyme catalyses a D-aminoacyl-tRNA + H2O = a tRNA + a D-alpha-amino acid + H(+). Functionally, an aminoacyl-tRNA editing enzyme that deacylates mischarged D-aminoacyl-tRNAs. Also deacylates mischarged glycyl-tRNA(Ala), protecting cells against glycine mischarging by AlaRS. Acts via tRNA-based rather than protein-based catalysis; rejects L-amino acids rather than detecting D-amino acids in the active site. By recycling D-aminoacyl-tRNA to D-amino acids and free tRNA molecules, this enzyme counteracts the toxicity associated with the formation of D-aminoacyl-tRNA entities in vivo and helps enforce protein L-homochirality. This chain is D-aminoacyl-tRNA deacylase, found in Cytophaga hutchinsonii (strain ATCC 33406 / DSM 1761 / CIP 103989 / NBRC 15051 / NCIMB 9469 / D465).